Here is a 336-residue protein sequence, read N- to C-terminus: Holliday junction branch migration complex subunit RuvB (336 aa).

The segment at 1-181 (MDRIVEIEKF…FGMQFRLEFY (181 aa)) is large ATPase domain (RuvB-L). ATP contacts are provided by residues L20, R21, G62, K65, T66, T67, 128 to 130 (EDF), R171, Y181, and R218. T66 contacts Mg(2+). The tract at residues 182–252 (KNEELAIILE…RAKEALDSLG (71 aa)) is small ATPAse domain (RuvB-S). Residues 255–336 (ELGFDAMDLR…KYNKGLFDEK (82 aa)) form a head domain (RuvB-H) region. DNA is bound by residues R309 and R314.

Belongs to the RuvB family. As to quaternary structure, homohexamer. Forms an RuvA(8)-RuvB(12)-Holliday junction (HJ) complex. HJ DNA is sandwiched between 2 RuvA tetramers; dsDNA enters through RuvA and exits via RuvB. An RuvB hexamer assembles on each DNA strand where it exits the tetramer. Each RuvB hexamer is contacted by two RuvA subunits (via domain III) on 2 adjacent RuvB subunits; this complex drives branch migration. In the full resolvosome a probable DNA-RuvA(4)-RuvB(12)-RuvC(2) complex forms which resolves the HJ.

It localises to the cytoplasm. The enzyme catalyses ATP + H2O = ADP + phosphate + H(+). In terms of biological role, the RuvA-RuvB-RuvC complex processes Holliday junction (HJ) DNA during genetic recombination and DNA repair, while the RuvA-RuvB complex plays an important role in the rescue of blocked DNA replication forks via replication fork reversal (RFR). RuvA specifically binds to HJ cruciform DNA, conferring on it an open structure. The RuvB hexamer acts as an ATP-dependent pump, pulling dsDNA into and through the RuvAB complex. RuvB forms 2 homohexamers on either side of HJ DNA bound by 1 or 2 RuvA tetramers; 4 subunits per hexamer contact DNA at a time. Coordinated motions by a converter formed by DNA-disengaged RuvB subunits stimulates ATP hydrolysis and nucleotide exchange. Immobilization of the converter enables RuvB to convert the ATP-contained energy into a lever motion, pulling 2 nucleotides of DNA out of the RuvA tetramer per ATP hydrolyzed, thus driving DNA branch migration. The RuvB motors rotate together with the DNA substrate, which together with the progressing nucleotide cycle form the mechanistic basis for DNA recombination by continuous HJ branch migration. Branch migration allows RuvC to scan DNA until it finds its consensus sequence, where it cleaves and resolves cruciform DNA. The protein is Holliday junction branch migration complex subunit RuvB of Campylobacter lari (strain RM2100 / D67 / ATCC BAA-1060).